A 213-amino-acid polypeptide reads, in one-letter code: Protein-L-isoaspartate O-methyltransferase (213 aa).

Residue Ser60 is part of the active site.

Belongs to the methyltransferase superfamily. L-isoaspartyl/D-aspartyl protein methyltransferase family.

It is found in the cytoplasm. It carries out the reaction [protein]-L-isoaspartate + S-adenosyl-L-methionine = [protein]-L-isoaspartate alpha-methyl ester + S-adenosyl-L-homocysteine. Its function is as follows. Catalyzes the methyl esterification of L-isoaspartyl residues in peptides and proteins that result from spontaneous decomposition of normal L-aspartyl and L-asparaginyl residues. It plays a role in the repair and/or degradation of damaged proteins. This chain is Protein-L-isoaspartate O-methyltransferase, found in Roseobacter denitrificans (strain ATCC 33942 / OCh 114) (Erythrobacter sp. (strain OCh 114)).